Here is a 334-residue protein sequence, read N- to C-terminus: uncharacterized protein (334 aa).

The next 2 membrane-spanning stretches (helical) occupy residues 1 to 21 (MFRLLLICITFLALYFGFTFI) and 46 to 66 (ILGLLLLVSCFIIIRFLIIII).

The protein localises to the cell membrane. This is an uncharacterized protein from Rickettsia prowazekii (strain Madrid E).